We begin with the raw amino-acid sequence, 230 residues long: C-methyltransferase CouO (230 aa).

Belongs to the methyltransferase superfamily.

The protein operates within antibiotic biosynthesis. Functionally, mediates C-methylation at the 8-position of the aminocoumarin moieties in coumermycin A1 in the biosynthetic pathway of coumermycin antibiotic. Active on both mono- and bis-amides for mono- and di-C-methylation adjacent to the phenolic hydroxyl before it is glycosylated by CouM. This Streptomyces rishiriensis protein is C-methyltransferase CouO (couO).